The primary structure comprises 505 residues: Maturase K (505 aa).

Belongs to the intron maturase 2 family. MatK subfamily.

It localises to the plastid. Its subcellular location is the chloroplast. Its function is as follows. Usually encoded in the trnK tRNA gene intron. Probably assists in splicing its own and other chloroplast group II introns. The sequence is that of Maturase K from Kunzea capitata (Pink kunzea).